The chain runs to 681 residues: Transketolase 2 (681 aa).

Residue histidine 30 participates in substrate binding. Thiamine diphosphate contacts are provided by residues histidine 69 and 116–118 (GPL). Aspartate 157 provides a ligand contact to Mg(2+). Thiamine diphosphate contacts are provided by glycine 158 and asparagine 187. Mg(2+) contacts are provided by asparagine 187 and isoleucine 189. 3 residues coordinate substrate: histidine 263, arginine 359, and serine 386. Residue histidine 263 coordinates thiamine diphosphate. Glutamate 418 and phenylalanine 445 together coordinate thiamine diphosphate. Glutamate 418 functions as the Proton donor in the catalytic mechanism. Substrate-binding residues include histidine 469, aspartate 477, and arginine 528.

The protein belongs to the transketolase family. In terms of assembly, homodimer. It depends on Mg(2+) as a cofactor. Ca(2+) is required as a cofactor. Requires Mn(2+) as cofactor. The cofactor is Co(2+). Thiamine diphosphate serves as cofactor.

The enzyme catalyses D-sedoheptulose 7-phosphate + D-glyceraldehyde 3-phosphate = aldehydo-D-ribose 5-phosphate + D-xylulose 5-phosphate. In terms of biological role, catalyzes the transfer of a two-carbon ketol group from a ketose donor to an aldose acceptor, via a covalent intermediate with the cofactor thiamine pyrophosphate. In Saccharomyces cerevisiae (strain ATCC 204508 / S288c) (Baker's yeast), this protein is Transketolase 2 (TKL2).